Consider the following 92-residue polypeptide: Nodulation protein F (92 aa).

Residues 4 to 88 (QLTVEIIAAI…DVVEAVRGLI (85 aa)) form the Carrier domain. Ser-45 is modified (O-(pantetheine 4'-phosphoryl)serine).

In terms of processing, 4'-phosphopantetheine is transferred from CoA to a specific serine of apo-NodF.

Its function is as follows. Proposed to synthesize nod factor fatty acyl chain. Involved in trans-2,trans-4,trans-6,cis-11-octadecatetraenoic acid biosynthesis. This is Nodulation protein F (nodF) from Rhizobium leguminosarum bv. trifolii.